The chain runs to 69 residues: Photosystem I reaction center subunit IV (69 aa).

This sequence belongs to the PsaE family.

Its subcellular location is the cellular thylakoid membrane. Functionally, stabilizes the interaction between PsaC and the PSI core, assists the docking of the ferredoxin to PSI and interacts with ferredoxin-NADP oxidoreductase. The sequence is that of Photosystem I reaction center subunit IV from Prochlorococcus marinus (strain MIT 9515).